The primary structure comprises 619 residues: Eukaryotic translation initiation factor 2-alpha kinase 1 (619 aa).

A disordered region spans residues 1-40 (MLGGSSVDGERDTDDDAAGAVAAPPAIDFPAEVSDPKYDE). Low complexity predominate over residues 18–28 (AGAVAAPPAID). The short motif at 85–104 (LHSKQVFKLLCQTFIKMGLL) is the SIFI-degron element. The Protein kinase domain occupies 167 to 580 (FEELAILGKG…ALQLLQSELF (414 aa)). ATP is bound by residues 173–181 (LGKGGYGRV) and Lys196. Thr283 carries the post-translational modification Phosphothreonine. The HRM 1 repeat unit spans residues 408–413 (ACPYVM). The active-site Proton acceptor is Asp440. Thr483, Thr485, and Thr490 each carry phosphothreonine; by autocatalysis. An HRM 2 repeat occupies 549–554 (RCPVQA).

The protein belongs to the protein kinase superfamily. Ser/Thr protein kinase family. GCN2 subfamily. As to quaternary structure, synthesized in an inactive form that binds to the N-terminal domain of CDC37. Has to be associated with a multiprotein complex containing Hsp90, CDC37 and PPP5C for maturation and activation by autophosphorylation. The phosphatase PPP5C modulates this activation. Homodimer; homodimerizes in presence of heme, forming a disulfide-linked inactive homodimer. Interacts with DELE1; binds both to full-length DELE1 and processed form of DELE1 (S-DELE1) in response to stress, leading to activate its protein kinase activity and trigger the integrated stress response (ISR). Activated by autophosphorylation; phosphorylated predominantly on serine and threonine residues, but also on tyrosine residues. Autophosphorylation at Thr-485 is required for kinase activation. The active autophosphorylated form apparently is largely refractory to cellular heme fluctuations. Post-translationally, ubiquitinated and degraded by the SIFI complex once the mitochondrial stress has been resolved, thereby providing stress response silencing. Within the SIFI complex, UBR4 initiates ubiquitin chain that are further elongated or branched by KCMF1. As to expression, expressed predominantly in erythroid cells, mature reticulocytes, as well as fetal liver nucleated erythroid cells. At much lower levels, expressed in hepatocytes and bone marrow-derived macrophages (at protein level).

It localises to the cytoplasm. It catalyses the reaction L-seryl-[protein] + ATP = O-phospho-L-seryl-[protein] + ADP + H(+). The catalysed reaction is L-threonyl-[protein] + ATP = O-phospho-L-threonyl-[protein] + ADP + H(+). Its activity is regulated as follows. In normal conditions, the protein kinase activity is inhibited; inhibition is relieved by various stress conditions. Inhibited by heme: in presence of heme, forms a disulfide-linked inactive homodimer. Heme depletion relieves inhibition and stimulates kinase activity by autophosphorylation. Inhibited by the heme metabolites biliverdin and bilirubin. Induced by oxidative stress generated by arsenite treatment. Binding of nitric oxide (NO) to the heme iron in the N-terminal heme-binding domain activates the kinase activity, while binding of carbon monoxide (CO) suppresses kinase activity. Protein kinase activity is also activated upon binding to DELE1 in response to various stress, triggering the integrated stress response (ISR): activated by full-length DELE1 in response to iron deficiency, while it is activated by the processed form of DELE1 (S-DELE1) in response to mitochondrial stress. Its function is as follows. Metabolic-stress sensing protein kinase that phosphorylates the alpha subunit of eukaryotic translation initiation factor 2 (EIF2S1/eIF-2-alpha) in response to various stress conditions. Key activator of the integrated stress response (ISR) required for adaptation to various stress, such as heme deficiency, oxidative stress, osmotic shock, mitochondrial dysfunction and heat shock. EIF2S1/eIF-2-alpha phosphorylation in response to stress converts EIF2S1/eIF-2-alpha in a global protein synthesis inhibitor, leading to a global attenuation of cap-dependent translation, while concomitantly initiating the preferential translation of ISR-specific mRNAs, such as the transcriptional activator ATF4, and hence allowing ATF4-mediated reprogramming. Acts as a key sensor of heme-deficiency: in normal conditions, binds hemin via a cysteine thiolate and histidine nitrogenous coordination, leading to inhibit the protein kinase activity. This binding occurs with moderate affinity, allowing it to sense the heme concentration within the cell: heme depletion relieves inhibition and stimulates kinase activity, activating the ISR. Thanks to this unique heme-sensing capacity, plays a crucial role to shut off protein synthesis during acute heme-deficient conditions. In red blood cells (RBCs), controls hemoglobin synthesis ensuring a coordinated regulation of the synthesis of its heme and globin moieties. It thereby plays an essential protective role for RBC survival in anemias of iron deficiency. Iron deficiency also triggers activation by full-length DELE1. Also activates the ISR in response to mitochondrial dysfunction: HRI/EIF2AK1 protein kinase activity is activated upon binding to the processed form of DELE1 (S-DELE1), thereby promoting the ATF4-mediated reprogramming. Also acts as an activator of mitophagy in response to mitochondrial damage: catalyzes phosphorylation of eIF-2-alpha (EIF2S1) following activation by S-DELE1, thereby promoting mitochondrial localization of EIF2S1, triggering PRKN-independent mitophagy. In Mus musculus (Mouse), this protein is Eukaryotic translation initiation factor 2-alpha kinase 1.